The following is a 207-amino-acid chain: Small ribosomal subunit protein uS2 (207 aa).

It belongs to the universal ribosomal protein uS2 family.

This Pyrobaculum islandicum (strain DSM 4184 / JCM 9189 / GEO3) protein is Small ribosomal subunit protein uS2.